The following is a 485-amino-acid chain: MKRKSERRSAWATAPPCSRRSSSSSPGVKKSRSSTPQELHRLEQQDDLYLDITDRLCFAILYSRPKSATNEHYFSIDNELEYENFYADFGPLNLAMVYRYCCKINKKLKSITMLRKKIIHFTGTDQRKQANAAFLVGCYMVIYLGRTPEDAYRTLIFGDTAYIPFRDAAYGSCSFYITLLDCFHAVKKAMQYGFFNFNSFNLDEYEHYEKAENGDFNWIIPERFLAFCGPHSRSRLESGYHQHSPETYIPYFKNHNVTTIIRLNKRMYDAKRFTDAGFDHHDLFFPDGSTPAESIVQEFLDICENVKGAIAVHCKAGLGRTGTLIGCYLMKHYRMTAAESIAWLRICRPGSVIGPQQQFLVMKQSSLWLEGDYFRQKLRGQENGPLREAFSKHLSDADDLSLNGLENQDNQEPEPYSDDDEVSGMTQGDRLRALKSRRQPKASAIPLTCPLAVLTSALCSVAIWWIVCDYILPTLLFCLDGFRTQ.

A disordered region spans residues 1–38; the sequence is MKRKSERRSAWATAPPCSRRSSSSSPGVKKSRSSTPQE. The short motif at 1–54 is the Nucleolar localization signal element; sequence MKRKSERRSAWATAPPCSRRSSSSSPGVKKSRSSTPQELHRLEQQDDLYLDITD. The span at 15 to 28 shows a compositional bias: low complexity; that stretch reads PPCSRRSSSSSPGV. Residues 44-198 form an a region; it reads QQDDLYLDIT…AMQYGFFNFN (155 aa). A linker region spans residues 199 to 212; that stretch reads SFNLDEYEHYEKAE. Residues 213 to 379 form a b region; the sequence is NGDFNWIIPE…EGDYFRQKLR (167 aa). The Tyrosine-protein phosphatase domain occupies 215 to 374; sequence DFNWIIPERF…SSLWLEGDYF (160 aa). The active-site Phosphocysteine intermediate is the Cys314. The segment at 402 to 424 is disordered; that stretch reads LNGLENQDNQEPEPYSDDDEVSG. A compositionally biased stretch (acidic residues) spans 409–422; it reads DNQEPEPYSDDDEV.

This sequence belongs to the protein-tyrosine phosphatase family. Non-receptor class CDC14 subfamily. Interacts with FZR1/CDH1.

It is found in the nucleus. The protein localises to the nucleolus. It localises to the nucleoplasm. It catalyses the reaction O-phospho-L-tyrosyl-[protein] + H2O = L-tyrosyl-[protein] + phosphate. The enzyme catalyses O-phospho-L-seryl-[protein] + H2O = L-seryl-[protein] + phosphate. It carries out the reaction O-phospho-L-threonyl-[protein] + H2O = L-threonyl-[protein] + phosphate. Functionally, dual-specificity phosphatase involved in DNA damage response. Essential regulator of the G2 DNA damage checkpoint: following DNA damage, translocates to the nucleus and dephosphorylates FZR1/CDH1, a key activator of the anaphase promoting complex/cyclosome (APC/C). Dephosphorylates SIRT2 around early anaphase. Dephosphorylation of FZR1/CDH1 activates the APC/C, leading to the ubiquitination of PLK1, preventing entry into mitosis. Preferentially dephosphorylates proteins modified by proline-directed kinases. This is Dual specificity protein phosphatase CDC14B (Cdc14b) from Mus musculus (Mouse).